Reading from the N-terminus, the 429-residue chain is Ribosomal RNA small subunit methyltransferase B (429 aa).

S-adenosyl-L-methionine-binding positions include 254–260, D277, D303, and D322; that span reads CAAPGGK. The Nucleophile role is filled by C375.

It belongs to the class I-like SAM-binding methyltransferase superfamily. RsmB/NOP family.

The protein localises to the cytoplasm. The enzyme catalyses cytidine(967) in 16S rRNA + S-adenosyl-L-methionine = 5-methylcytidine(967) in 16S rRNA + S-adenosyl-L-homocysteine + H(+). Functionally, specifically methylates the cytosine at position 967 (m5C967) of 16S rRNA. This is Ribosomal RNA small subunit methyltransferase B from Shigella boydii serotype 4 (strain Sb227).